A 395-amino-acid chain; its full sequence is Obg-like ATPase 1 (395 aa).

In terms of domain architecture, OBG-type G spans 22 to 280; the sequence is LKVGILGLPN…MPEDERQKYL (259 aa). 31–36 contributes to the ATP binding site; it reads NVGKST. Mg(2+) is bound by residues Ser-35 and Thr-55. Leu-228 is a binding site for ATP. Positions 301 to 384 constitute a TGS domain; that stretch reads QLEYFFTSGE…QDGDVIFFKF (84 aa).

It belongs to the TRAFAC class OBG-HflX-like GTPase superfamily. OBG GTPase family. YchF/OLA1 subfamily. As to quaternary structure, monomer. Requires Mg(2+) as cofactor. In terms of tissue distribution, expressed in the nervous system, pharyngeal muscles and intestine (at protein level).

It is found in the cytoplasm. Functionally, hydrolyzes ATP, and can also hydrolyze GTP with lower efficiency. Has lower affinity for GTP. Plays a role in regulating starvation-induced thermotaxis responses in AFD thermosensory neurons. This Caenorhabditis elegans protein is Obg-like ATPase 1.